We begin with the raw amino-acid sequence, 280 residues long: Bifunctional protein FolD (280 aa).

NADP(+) contacts are provided by residues 166-168 (GRS) and Ser191.

The protein belongs to the tetrahydrofolate dehydrogenase/cyclohydrolase family. Homodimer.

The catalysed reaction is (6R)-5,10-methylene-5,6,7,8-tetrahydrofolate + NADP(+) = (6R)-5,10-methenyltetrahydrofolate + NADPH. It carries out the reaction (6R)-5,10-methenyltetrahydrofolate + H2O = (6R)-10-formyltetrahydrofolate + H(+). It functions in the pathway one-carbon metabolism; tetrahydrofolate interconversion. Catalyzes the oxidation of 5,10-methylenetetrahydrofolate to 5,10-methenyltetrahydrofolate and then the hydrolysis of 5,10-methenyltetrahydrofolate to 10-formyltetrahydrofolate. This is Bifunctional protein FolD from Marinomonas sp. (strain MWYL1).